A 388-amino-acid chain; its full sequence is Succinate--CoA ligase [ADP-forming] subunit beta (388 aa).

In terms of domain architecture, ATP-grasp spans K9–Q244. ATP-binding positions include K46, G53 to G55, E99, T102, and E107. The Mg(2+) site is built by N199 and D213. Substrate contacts are provided by residues N264 and G321 to V323.

It belongs to the succinate/malate CoA ligase beta subunit family. As to quaternary structure, heterotetramer of two alpha and two beta subunits. Mg(2+) serves as cofactor.

It carries out the reaction succinate + ATP + CoA = succinyl-CoA + ADP + phosphate. The enzyme catalyses GTP + succinate + CoA = succinyl-CoA + GDP + phosphate. It functions in the pathway carbohydrate metabolism; tricarboxylic acid cycle; succinate from succinyl-CoA (ligase route): step 1/1. Succinyl-CoA synthetase functions in the citric acid cycle (TCA), coupling the hydrolysis of succinyl-CoA to the synthesis of either ATP or GTP and thus represents the only step of substrate-level phosphorylation in the TCA. The beta subunit provides nucleotide specificity of the enzyme and binds the substrate succinate, while the binding sites for coenzyme A and phosphate are found in the alpha subunit. The chain is Succinate--CoA ligase [ADP-forming] subunit beta from Salmonella dublin (strain CT_02021853).